A 260-amino-acid polypeptide reads, in one-letter code: MAARRISDEPAYVLHRYDWSESSLILDVFTRHHGRVALVARGAKKPTSNFRPVLLPLQPLRITYTLNGEGREEVHGLKGAEWVGGHVMPTGDALLSGLYLNELLMRLLAREDTHAALFDAYAGVVRVLASEHGDALEPVLRSFELLLLREIGLLPALDVETSTLAPLAPAARYALVPEAGLRPALPSDRSTLGGAQWRQLERSLGEAQPYTATLRAIVAGLAASASPAADLKPQLRALLQYHCGSPMLRTRQLMIDLQSL.

It belongs to the RecO family.

Involved in DNA repair and RecF pathway recombination. In Paracidovorax citrulli (strain AAC00-1) (Acidovorax citrulli), this protein is DNA repair protein RecO.